The primary structure comprises 678 residues: UvrABC system protein B (678 aa).

The region spanning 31-417 is the Helicase ATP-binding domain; the sequence is ENLNDGLAHQ…KSGTEIIDQV (387 aa). Position 44-51 (44-51) interacts with ATP; the sequence is GVTGSGKT. A Beta-hairpin motif is present at residues 97-120; the sequence is YYDYYQPEAYVPSSDTFIEKDASI. Residues 436 to 602 enclose the Helicase C-terminal domain; the sequence is QVDDLLSEAR…GLNKKVGELL (167 aa). Residues 603–625 are disordered; it reads DIGQGGSNKSRNKPRSQKAAEPA. The UVR domain occupies 638 to 673; it reads QQQIKKLEQQMYKFAQDLEFEKAAAIRDQLHKLREQ.

The protein belongs to the UvrB family. In terms of assembly, forms a heterotetramer with UvrA during the search for lesions. Interacts with UvrC in an incision complex.

It is found in the cytoplasm. Functionally, the UvrABC repair system catalyzes the recognition and processing of DNA lesions. A damage recognition complex composed of 2 UvrA and 2 UvrB subunits scans DNA for abnormalities. Upon binding of the UvrA(2)B(2) complex to a putative damaged site, the DNA wraps around one UvrB monomer. DNA wrap is dependent on ATP binding by UvrB and probably causes local melting of the DNA helix, facilitating insertion of UvrB beta-hairpin between the DNA strands. Then UvrB probes one DNA strand for the presence of a lesion. If a lesion is found the UvrA subunits dissociate and the UvrB-DNA preincision complex is formed. This complex is subsequently bound by UvrC and the second UvrB is released. If no lesion is found, the DNA wraps around the other UvrB subunit that will check the other stand for damage. This Mannheimia succiniciproducens (strain KCTC 0769BP / MBEL55E) protein is UvrABC system protein B.